Here is an 86-residue protein sequence, read N- to C-terminus: Translation machinery-associated protein 10 (86 aa).

2 positions are modified to phosphoserine: serine 28 and serine 79. The disordered stretch occupies residues asparagine 63–isoleucine 86.

This sequence belongs to the STF2 family. As to quaternary structure, associates with ribosomes.

It is found in the cytoplasm. The protein resides in the nucleus. Its function is as follows. May be involved in inhibition of the reverse ATPase reaction of mitochondrial F(1)F(0)-type ATP synthase. This Saccharomyces cerevisiae (strain ATCC 204508 / S288c) (Baker's yeast) protein is Translation machinery-associated protein 10.